Consider the following 228-residue polypeptide: UPF0758 protein CLB_3028 (228 aa).

The MPN domain occupies 106-228; it reads KISTPLDVSN…YVSMKEKGTI (123 aa). Zn(2+) contacts are provided by His177, His179, and Asp190. A JAMM motif motif is present at residues 177 to 190; it reads HNHPSGDPTPSKED.

The protein belongs to the UPF0758 family.

The protein is UPF0758 protein CLB_3028 of Clostridium botulinum (strain ATCC 19397 / Type A).